The following is a 466-amino-acid chain: ATP synthase subunit beta (466 aa).

153–160 contributes to the ATP binding site; sequence GGAGVGKT.

This sequence belongs to the ATPase alpha/beta chains family. In terms of assembly, F-type ATPases have 2 components, CF(1) - the catalytic core - and CF(0) - the membrane proton channel. CF(1) has five subunits: alpha(3), beta(3), gamma(1), delta(1), epsilon(1). CF(0) has three main subunits: a(1), b(2) and c(9-12). The alpha and beta chains form an alternating ring which encloses part of the gamma chain. CF(1) is attached to CF(0) by a central stalk formed by the gamma and epsilon chains, while a peripheral stalk is formed by the delta and b chains.

It localises to the cell membrane. The enzyme catalyses ATP + H2O + 4 H(+)(in) = ADP + phosphate + 5 H(+)(out). Functionally, produces ATP from ADP in the presence of a proton gradient across the membrane. The catalytic sites are hosted primarily by the beta subunits. The sequence is that of ATP synthase subunit beta from Leuconostoc citreum (strain KM20).